We begin with the raw amino-acid sequence, 86 residues long: Small ribosomal subunit protein bS20 (86 aa).

The disordered stretch occupies residues Met-1–Lys-25.

This sequence belongs to the bacterial ribosomal protein bS20 family.

Its function is as follows. Binds directly to 16S ribosomal RNA. This is Small ribosomal subunit protein bS20 from Nocardia farcinica (strain IFM 10152).